Reading from the N-terminus, the 459-residue chain is MALTPIPSTFTSLFNFSDHSPYPSPSLHYLLPGSSPSFSLQLSALSRTPIYFEALKVLSRSKCFAKSPTTAEDFVGDYESLNVSDDDDGSDSNSSDGDNGGGRDDSKKIDSSSSSSSSDSTSLGIREPVYEVVEVKATGAISTRKINRRQLLKSSGLRPRDIRSVDPSLFMTNSVPSLLVREHAILLNLGSLRAIAMRDRVLIFDYNRRGGRAFVDTLMPRLNPRSMNGGPSMPFELEAVESALISRIQRLEQRLMDIEPRVQALLEVLPNRLTADILEELRISKQRLVELGSRAGALRQMLLDLLEDPHEIRRICIMGRNCTLRRGDDDLECTLPSDKLIAEEEEEEIEMLLENYLQRCESCHGQAERLLDSAKEMEDSIAVNLSSRRLEVSRFELLLQVGTFCVAVGALIAGIFGMNLRSYLEEQASAFWLTTGGIIIGAAVAFFLMYSYLSRRKIF.

Residues 1–62 (MALTPIPSTF…EALKVLSRSK (62 aa)) constitute a chloroplast transit peptide. A disordered region spans residues 76–122 (GDYESLNVSDDDDGSDSNSSDGDNGGGRDDSKKIDSSSSSSSSDSTS). Positions 101-110 (GGRDDSKKID) are enriched in basic and acidic residues. Residues 111–122 (SSSSSSSSDSTS) show a composition bias toward low complexity. 2 helical membrane-spanning segments follow: residues 397–417 (LLLQ…GIFG) and 430–450 (AFWL…FLMY). A Required for magnesium transport activity motif is present at residues 417–419 (GMN).

It belongs to the CorA metal ion transporter (MIT) (TC 1.A.35.5) family. As to expression, expressed in the green part of the plant. Preferentially expressed in the spongy mesophyll cells and stomata of young leaves but also detected in cotyledons and at the base of the leaf petioles.

It is found in the plastid. Its subcellular location is the chloroplast membrane. Its function is as follows. High-affinity magnesium transporter that mediates the influx of magnesium in chloroplast. The chain is Magnesium transporter MRS2-11, chloroplastic (MRS2-11) from Arabidopsis thaliana (Mouse-ear cress).